The following is a 257-amino-acid chain: Adenosylcobinamide-GDP ribazoletransferase (257 aa).

A run of 6 helical transmembrane segments spans residues 4 to 24, 40 to 60, 64 to 84, 116 to 136, 140 to 160, and 193 to 213; these read AVRG…WWLG, VVGL…QWFF, FVVQ…LLHL, AAVA…AALL, AALA…ALLI, and LFVT…VVAV.

The protein belongs to the CobS family. Requires Mg(2+) as cofactor.

It localises to the cell inner membrane. The enzyme catalyses alpha-ribazole + adenosylcob(III)inamide-GDP = adenosylcob(III)alamin + GMP + H(+). The catalysed reaction is alpha-ribazole 5'-phosphate + adenosylcob(III)inamide-GDP = adenosylcob(III)alamin 5'-phosphate + GMP + H(+). Its pathway is cofactor biosynthesis; adenosylcobalamin biosynthesis; adenosylcobalamin from cob(II)yrinate a,c-diamide: step 7/7. Functionally, joins adenosylcobinamide-GDP and alpha-ribazole to generate adenosylcobalamin (Ado-cobalamin). Also synthesizes adenosylcobalamin 5'-phosphate from adenosylcobinamide-GDP and alpha-ribazole 5'-phosphate. This Alkalilimnicola ehrlichii (strain ATCC BAA-1101 / DSM 17681 / MLHE-1) protein is Adenosylcobinamide-GDP ribazoletransferase.